A 356-amino-acid polypeptide reads, in one-letter code: sn-glycerol-3-phosphate import ATP-binding protein UgpC (356 aa).

An ABC transporter domain is found at 4–235; it reads LKLQAVTKSW…PASLFVASFI (232 aa). 37-44 is an ATP binding site; that stretch reads GPSGCGKS.

This sequence belongs to the ABC transporter superfamily. sn-glycerol-3-phosphate importer (TC 3.A.1.1.3) family. As to quaternary structure, the complex is composed of two ATP-binding proteins (UgpC), two transmembrane proteins (UgpA and UgpE) and a solute-binding protein (UgpB).

It localises to the cell inner membrane. The enzyme catalyses sn-glycerol 3-phosphate(out) + ATP + H2O = sn-glycerol 3-phosphate(in) + ADP + phosphate + H(+). It catalyses the reaction glycerol 2-phosphate(out) + ATP + H2O = glycerol 2-phosphate(in) + ADP + phosphate + H(+). Its activity is regulated as follows. ATPase activity is stimulated when UgpB is bound to G3P. Transport is inhibited in vivo by increasing levels of internal phosphate. However, ATPase activity in proteoliposomes is neither inhibited by phosphate nor by the signal transducing protein PhoU or the phosphodiesterase UgpQ. Activated by gluconate and inhibited by fumarate. Part of the ABC transporter complex UgpBAEC involved in sn-glycerol-3-phosphate (G3P) import. Responsible for energy coupling to the transport system. Can also transport glycerophosphoryl diesters, which are hydrolyzed to G3P and alcohol during transport. The G3P moiety can be detected in the cytoplasm whereas the corresponding alcohol is usually found in the culture medium. It was proposed by Yang et al that the complex could also transport glycerol-2-phosphate (G2P) in vivo, but it was shown later by Wuttge et al that UgpB does not bind G2P, questioning this transport activity. G2P might be converted in the periplasm to G3P before its transport. This Escherichia coli (strain K12) protein is sn-glycerol-3-phosphate import ATP-binding protein UgpC.